The chain runs to 419 residues: Acyl-[acyl-carrier-protein] desaturase 6, chloroplastic (419 aa).

The transit peptide at 1–54 (MAATATMAMPLANRLRCKPNTNSSSPSRTLFGRRVTMISSSRWGSAVSGSAIMS) directs the protein to the chloroplast. Fe cation is bound by residues glutamate 151, glutamate 189, histidine 192, glutamate 242, glutamate 277, and histidine 280.

The protein belongs to the fatty acid desaturase type 2 family. In terms of assembly, homodimer. It depends on Fe(2+) as a cofactor.

The protein localises to the plastid. The protein resides in the chloroplast. It participates in lipid metabolism; fatty acid metabolism. Functionally, introduces a cis double bond in the acyl chain of an acyl-[acyl-carrier protein]. The protein is Acyl-[acyl-carrier-protein] desaturase 6, chloroplastic of Oryza sativa subsp. japonica (Rice).